The sequence spans 290 residues: Acetylglutamate kinase (290 aa).

Substrate contacts are provided by residues 65–66 (GG), R87, and N186.

Belongs to the acetylglutamate kinase family. ArgB subfamily.

The protein localises to the cytoplasm. It catalyses the reaction N-acetyl-L-glutamate + ATP = N-acetyl-L-glutamyl 5-phosphate + ADP. It participates in amino-acid biosynthesis; L-arginine biosynthesis; N(2)-acetyl-L-ornithine from L-glutamate: step 2/4. Functionally, catalyzes the ATP-dependent phosphorylation of N-acetyl-L-glutamate. This is Acetylglutamate kinase from Mycobacterium sp. (strain JLS).